An 80-amino-acid polypeptide reads, in one-letter code: Sulfur carrier protein TusA (80 aa).

C17 functions as the Cysteine persulfide intermediate in the catalytic mechanism.

It belongs to the sulfur carrier protein TusA family.

Its subcellular location is the cytoplasm. In terms of biological role, sulfur carrier protein which probably makes part of a sulfur-relay system. The polypeptide is Sulfur carrier protein TusA (Pseudomonas putida (strain W619)).